A 518-amino-acid polypeptide reads, in one-letter code: Putative beta-xylosidase (518 aa).

The active-site Proton acceptor is D47. Catalysis depends on E203, which acts as the Proton donor.

This sequence belongs to the glycosyl hydrolase 43 family.

It carries out the reaction Hydrolysis of (1-&gt;4)-beta-D-xylans, to remove successive D-xylose residues from the non-reducing termini.. The sequence is that of Putative beta-xylosidase from Xylanibacter ruminicola (Prevotella ruminicola).